We begin with the raw amino-acid sequence, 270 residues long: tRNA pseudouridine synthase A (270 aa).

D51 serves as the catalytic Nucleophile. A substrate-binding site is contributed by Y109.

Belongs to the tRNA pseudouridine synthase TruA family. As to quaternary structure, homodimer.

The enzyme catalyses uridine(38/39/40) in tRNA = pseudouridine(38/39/40) in tRNA. Its function is as follows. Formation of pseudouridine at positions 38, 39 and 40 in the anticodon stem and loop of transfer RNAs. This is tRNA pseudouridine synthase A from Burkholderia mallei (strain ATCC 23344).